The primary structure comprises 195 residues: Pyruvoyl-dependent arginine decarboxylase AaxB (195 aa).

Ser53 bears the Pyruvic acid (Ser) mark.

It belongs to the pyruvoyl-dependent arginine decarboxylase family. As to quaternary structure, trimer of an alpha-beta dimer. The cofactor is pyruvate.

It localises to the cytoplasm. The enzyme catalyses L-arginine + H(+) = agmatine + CO2. In terms of biological role, part of the AaxABC system, catalyzes the decarboxylation of L-arginine. The arginine uptake by the bacterium in the macrophage may be a virulence factor against the host innate immune response. The chain is Pyruvoyl-dependent arginine decarboxylase AaxB (aaxB) from Chlamydia muridarum (strain MoPn / Nigg).